The primary structure comprises 580 residues: MRASLPVHLVVCTQLSAVWFGVAKAHGGHRLEPHVPGFLQGFTDITPAGDDVSANVTSSEPAKLDLSCVHSDNKGSRAPTIGEPVPDVSLEQCAAQCKAVDGCTHFTYNDDSKMCHVKEGKPDLYDLTGGKTASRSCDRSCFEQHVSYEGAPDVMTAMVTSQSADCQAACAADPSCEIFTYNEHDQKCTFKGRGFSAFKERGVLGVTSGPKQFCDEGGKLTQEEMEDQISGCIQLSDVGSMTADLEEPMEADSVGACMERCRCDGRCTHFTFNDNTRMCYLKGDKMQLYSSPGDRTGPKSCDSSCFSNGVSYVDDPATDVETVFEISHPIYCQVICAANPLCTVFQWYASEAKCVVKRKGFYKHRKTGVTGVTVGPREFCDFGGSIRDREEADAVGSDDGLNAEATMANSPDFHDEVECVHTGNIGSKAQTIGEVKRASSLSECRARCQAEKECSHYTYNVKSGLCYPKRGKPQFYKYLGDMTGSRTCDTSCLRRGVDYSQGPEVGKPWYSTLPTDCQVACDAEDACLVFTWDSATSRCYLIGSGFSAHRRNDVDGVVSGPYTFCDNGENLQVLEAKDTE.

Positions 1–25 (MRASLPVHLVVCTQLSAVWFGVAKA) are cleaved as a signal peptide. Apple domains follow at residues 68–137 (CVHS…SRSC), 141–214 (CFEQ…KQFC), 232–301 (CIQL…PKSC), 305–375 (CFSN…VTVG), 419–488 (CVHT…SRTC), and 492–565 (CLRR…YTFC). 15 cysteine pairs are disulfide-bonded: Cys-68–Cys-137, Cys-93–Cys-115, Cys-97–Cys-103, Cys-141–Cys-214, Cys-166–Cys-188, Cys-170–Cys-176, Cys-232–Cys-301, Cys-257–Cys-279, Cys-261–Cys-267, Cys-305–Cys-380, Cys-332–Cys-354, Cys-336–Cys-342, Cys-419–Cys-488, Cys-444–Cys-466, and Cys-448–Cys-454.

As to quaternary structure, monomer. Part of the MIC6-MIC1-MIC4 complex. Interacts (via the second apple domain) directly with MIC1 (via the beta-finger region). Interacts with murine TLR2; the interaction promotes activation of bone marrow-derived dendritic cells and macrophages in the host. Interacts with murine TLR4; the interaction promotes activation of bone marrow-derived dendritic cells and macrophages in the host. Post-translationally, proteolytically cleaved at the N- and C-terminus after release from the microneme.

It is found in the cytoplasmic vesicle. The protein resides in the secretory vesicle. The protein localises to the microneme. Its subcellular location is the host early endosome. With respect to regulation, lacto-N-biose inhibits binding to asialofetuin, a host glycoprotein. Functionally, soluble adhesin with carbohydrate-binding activity. Binds to galactose-terminating oligosaccharides. Required for attachment of the parasite to the host cell prior to invasion. Triggers the activation of murine bone marrow-derived dendritic cells and macrophages and production of pro-inflammatory cytokines, such as IL12 (IL12B/IL12A), in host TLR2/TLR4-dependent manner. Triggers the production of anti-inflammatory cytokine IL10 in murine bone marrow-derived macrophages in host TLR4-dependent manner. Induces transient endotoxin tolerance in murine bone marrow-derived macrophages, manifested by reduced TNF-alpha (TNF) production in response to challenge with lipopolysaccharides (LPS). This Toxoplasma gondii protein is Micronemal protein 4.